Here is a 193-residue protein sequence, read N- to C-terminus: Pyridoxal 5'-phosphate synthase subunit PdxT (193 aa).

50 to 52 (GES) lines the L-glutamine pocket. The active-site Nucleophile is the Cys82. L-glutamine is bound by residues Arg109 and 136–137 (IR). Residues His172 and Glu174 each act as charge relay system in the active site.

Belongs to the glutaminase PdxT/SNO family. In terms of assembly, in the presence of PdxS, forms a dodecamer of heterodimers. Only shows activity in the heterodimer.

It carries out the reaction aldehydo-D-ribose 5-phosphate + D-glyceraldehyde 3-phosphate + L-glutamine = pyridoxal 5'-phosphate + L-glutamate + phosphate + 3 H2O + H(+). It catalyses the reaction L-glutamine + H2O = L-glutamate + NH4(+). It functions in the pathway cofactor biosynthesis; pyridoxal 5'-phosphate biosynthesis. Catalyzes the hydrolysis of glutamine to glutamate and ammonia as part of the biosynthesis of pyridoxal 5'-phosphate. The resulting ammonia molecule is channeled to the active site of PdxS. The protein is Pyridoxal 5'-phosphate synthase subunit PdxT of Streptococcus pneumoniae serotype 19F (strain G54).